The following is a 307-amino-acid chain: UDP-N-acetylenolpyruvoylglucosamine reductase (307 aa).

In terms of domain architecture, FAD-binding PCMH-type spans 33 to 198; it reads KVGGPVDILV…LEAILKLSLG (166 aa). R177 is an active-site residue. The Proton donor role is filled by S227. E297 is a catalytic residue.

It belongs to the MurB family. FAD serves as cofactor.

Its subcellular location is the cytoplasm. The catalysed reaction is UDP-N-acetyl-alpha-D-muramate + NADP(+) = UDP-N-acetyl-3-O-(1-carboxyvinyl)-alpha-D-glucosamine + NADPH + H(+). It functions in the pathway cell wall biogenesis; peptidoglycan biosynthesis. In terms of biological role, cell wall formation. This Clostridium tetani (strain Massachusetts / E88) protein is UDP-N-acetylenolpyruvoylglucosamine reductase.